A 229-amino-acid chain; its full sequence is MAKLTKKMKAIKAGVDSTKAYEINEAIAVLKQFATAKFVESVDVAVNLGIDPRKSHQNVRGATVLPHGTGRTARVAVFTQGENAEAAKAPGADLVGMEDLAEQIKKGEKNFDVVIPSPDAMRVVGQLGQVLGPRGLIPNLKVGTVTPNVVEAVKNAKSGQIRPRNAKNGIIHTTIGKADFAPEQLKDNLVALLAALNKAKPTTVKGIFIKKVSISTTMGAGVAVDQASL.

It belongs to the universal ribosomal protein uL1 family. As to quaternary structure, part of the 50S ribosomal subunit.

Its function is as follows. Binds directly to 23S rRNA. The L1 stalk is quite mobile in the ribosome, and is involved in E site tRNA release. Functionally, protein L1 is also a translational repressor protein, it controls the translation of the L11 operon by binding to its mRNA. In Actinobacillus pleuropneumoniae serotype 3 (strain JL03), this protein is Large ribosomal subunit protein uL1.